Here is a 546-residue protein sequence, read N- to C-terminus: MTIPHEVLAQGWIPFTVVVVLAILFSWFYIRYYQDHSQSEVSSTITGIIALFIALMTTALVPVDIFLVSYMKNDDGSWKPWSANRMNRDDIEETAVATTYYILYALLAFFVFVIIPFMYFFFEERDEDITTAERACGALKYSIGFLIVASVLLLVGAFAPLKQPPKNVTEWDKRLIFLKDELKSNNGETALSLLIGFLTLIGMLIMITYTAYGMTALPFSLLKGFKSAKTEQESVTRRRSRNQEQARLIKAQYMGGRAMSSRDRRRLSELEKEEHALATRERRLEAAQLGWLNKCLKLLRPFEMVFGAFFLLVALLIFVSLFITCLDKALHSNGYQYGYSLPTPQLPNPINIIMVYAQIVFPLDYCLFLLVVLYFVYSSMAGIRRVGIRCCWIKLFKVRPRRTLPQALLFMCVMLMLIVLSLNVMLFSLAPQYVMYGSQNYRANSTVTSLVNHTGIIQNVTTSHGIAKVCSMEMSSDHCTMTRIAVFLNRFFYKVWFFGACYYWGTWLFLVVFMTGLIYSIVRKRKTVVDEEYDSSDDSDEEMVTA.

4 helical membrane-spanning segments follow: residues 8 to 28 (LAQG…FSWF), 48 to 68 (IIAL…IFLV), 102 to 122 (ILYA…YFFF), and 141 to 161 (YSIG…FAPL). Asparagine 167 carries an N-linked (GlcNAc...) asparagine glycan. Transmembrane regions (helical) follow at residues 189-209 (TALS…MITY), 304-324 (MVFG…LFIT), 352-372 (IIMV…LLVV), and 407-427 (ALLF…VMLF). N-linked (GlcNAc...) asparagine glycans are attached at residues asparagine 444, asparagine 452, and asparagine 459. Residues 495 to 515 (VWFFGACYYWGTWLFLVVFMT) form a helical membrane-spanning segment.

This sequence belongs to the LIMR family. LMBRD1 subfamily.

The protein resides in the lysosome membrane. Its function is as follows. Probable lysosomal cobalamin transporter. Required to export cobalamin from lysosomes allowing its conversion to cofactors. The protein is Probable lysosomal cobalamin transporter of Nematostella vectensis (Starlet sea anemone).